A 469-amino-acid chain; its full sequence is Protopanaxadiol 6-hydroxylase (469 aa).

Residues 3–23 (LFISSQLLLLLVFCLFLFWNF) form a helical membrane-spanning segment. Cys-416 is a heme binding site.

The protein belongs to the cytochrome P450 family. Heme is required as a cofactor. In terms of tissue distribution, accumulates ubiquitously in all organs of plants, including roots, stems and leaves.

The protein localises to the membrane. The catalysed reaction is (20S)-protopanaxadiol + reduced [NADPH--hemoprotein reductase] + O2 = (20S)-protopanaxatriol + oxidized [NADPH--hemoprotein reductase] + H2O + H(+). It participates in secondary metabolite biosynthesis; terpenoid biosynthesis. Its activity is regulated as follows. Activated by N,N'-dicyclohexylcarbodiimide (DCCD) thus leading to increased ginsenosides accumulation. Its function is as follows. Component of the dammarane-type triterpene saponins (e.g. PPT-type ginsenosides or panaxosides) biosynthetic pathway. Catalyzes the formation of protopanaxatriol from protopanaxadiol during ginsenoside biosynthesis, a class of tetracyclic triterpenoid saponins. The chain is Protopanaxadiol 6-hydroxylase from Panax ginseng (Korean ginseng).